A 655-amino-acid chain; its full sequence is A-type voltage-gated potassium channel KCND3 (655 aa).

Topologically, residues 1–182 (MAAGVAAWLP…FENPHTSTLA (182 aa)) are cytoplasmic. The segment at 6–21 (AAWLPFARAAAIGWMP) is interaction with KCNIP1 and KCNIP2. The segment at 70-78 (EKEFFFNED) is interaction with KCNIP1. The Zn(2+) site is built by His-104, Cys-110, Cys-131, and Cys-132. At Ser-153 the chain carries Phosphoserine. Residues 183-204 (LVFYYVTGFFIAVSVITNVVET) form a helical membrane-spanning segment. At 205 to 223 (VPCGTVPGSKELPCGERYS) the chain is on the extracellular side. A helical transmembrane segment spans residues 224–246 (VAFFCLDTACVMIFTVEYLLRLF). Over 247-253 (AAPSRYR) the chain is Cytoplasmic. A helical transmembrane segment spans residues 254–277 (FIRSVMSIIDVVAIMPYYIGLVMT). Residues 278-283 (NNEDVS) are Extracellular-facing. Residues 284-306 (GAFVTLRVFRVFRIFKFSRHSQG) form a helical; Voltage-sensor membrane-spanning segment. Topologically, residues 307–318 (LRILGYTLKSCA) are cytoplasmic. The helical transmembrane segment at 319–343 (SELGFLLFSLTMAIIIFATVMFYAE) threads the bilayer. Topologically, residues 344–352 (KGSSASKFT) are extracellular. An intramembrane region (helical) is located at residues 353–366 (SIPASFWYTIVTMT). Positions 367, 368, 369, and 370 each coordinate K(+). Positions 367-372 (TLGYGD) match the Selectivity filter motif. Residues 367–374 (TLGYGDMV) lie within the membrane without spanning it. The chain crosses the membrane as a helical span at residues 378 to 400 (IAGKIFGSICSLSGVLVIALPVP). Topologically, residues 401–655 (VIVSNFSRIY…ASNVVKVSVL (255 aa)) are cytoplasmic. Thr-459 is subject to Phosphothreonine. The interval 470–487 (SLIESQHHHLLHCLEKTT) is interaction with KCNIP1 and KCNIP2. The segment at 472–487 (IESQHHHLLHCLEKTT) is mediates dendritic targeting. Ser-569 bears the Phosphoserine; by CaMK2D mark. Ser-585 is modified (phosphoserine). The tract at residues 618–644 (PAPPALTPEGETRPPPASPGPNTNIPS) is disordered.

Belongs to the potassium channel family. D (Shal) (TC 1.A.1.2) subfamily. Kv4.3/KCND3 sub-subfamily. In terms of assembly, homotetramer. Heterotetramer with KCND2. Associates with the regulatory subunits KCNIP3 and KCNIP4. Interacts with KCNE1, KCNE2, SCN1B and KCNAB1 and DLG1. Component of heteromultimeric potassium channels. Identified in potassium channel complexes containing KCND1, KCND2, KCND3, KCNIP1, KCNIP2, KCNIP3, KCNIP4, DPP6 and DPP10. Interacts with KCNIP1; each KCNIP1 monomer interacts with two adjacent KCND3 subunits, through both the N-terminal inactivation ball of a KCND3 subunit and a C-terminal helix from the adjacent KCND3 subunit, clamping them together; this interaction stabilizes the tetrameric form and modulates the channel gating kinetics namely channel activation and inactivation kinetics and rate of recovery from inactivation. Interacts with DPP6; this interaction modulates the channel gating kinetics namely channel activation and inactivation kinetics and rate of recovery from inactivation. Interacts with KCNIP2; each KCNIP2 monomer interacts with two adjacent KCND3 subunits, through both the N-terminal inactivation ball of a KCND3 subunit and a C-terminal helix from the adjacent KCND3 subunit, clamping them together; this interaction modulates the channel gating kinetics. In terms of processing, regulated through phosphorylation at Ser-569 by CaMK2D. As to expression, detected in carotid body chemoreceptor cells and in frontal cortex.

It localises to the cell membrane. The protein resides in the sarcolemma. The protein localises to the cell projection. Its subcellular location is the dendrite. It catalyses the reaction K(+)(in) = K(+)(out). Its function is as follows. Pore-forming (alpha) subunit of voltage-gated A-type potassium channels that mediates transmembrane potassium transport in excitable membranes, in brain and heart. In cardiomyocytes, may generate the transient outward potassium current I(To). In neurons, may conduct the transient subthreshold somatodendritic A-type potassium current (ISA). Kinetics properties are characterized by fast activation at subthreshold membrane potentials, rapid inactivation, and quick recovery from inactivation. Channel properties are modulated by interactions with regulatory subunits. Interaction with the regulatory subunits KCNIP1 or KCNIP2 modulates the channel gating kinetics namely channel activation and inactivation kinetics and rate of recovery from inactivation. Likewise, interaction with DPP6 modulates the channel gating kinetics namely channel activation and inactivation kinetics. The sequence is that of A-type voltage-gated potassium channel KCND3 from Oryctolagus cuniculus (Rabbit).